We begin with the raw amino-acid sequence, 56 residues long: Large ribosomal subunit protein bL33 (56 aa).

This sequence belongs to the bacterial ribosomal protein bL33 family.

This Treponema denticola (strain ATCC 35405 / DSM 14222 / CIP 103919 / JCM 8153 / KCTC 15104) protein is Large ribosomal subunit protein bL33.